Consider the following 295-residue polypeptide: 4-hydroxy-tetrahydrodipicolinate synthase 1 (295 aa).

Position 46 (threonine 46) interacts with pyruvate. Tyrosine 134 serves as the catalytic Proton donor/acceptor. The Schiff-base intermediate with substrate role is filled by lysine 162. Valine 204 provides a ligand contact to pyruvate.

The protein belongs to the DapA family. As to quaternary structure, homotetramer; dimer of dimers.

It localises to the cytoplasm. It carries out the reaction L-aspartate 4-semialdehyde + pyruvate = (2S,4S)-4-hydroxy-2,3,4,5-tetrahydrodipicolinate + H2O + H(+). It participates in amino-acid biosynthesis; L-lysine biosynthesis via DAP pathway; (S)-tetrahydrodipicolinate from L-aspartate: step 3/4. Functionally, catalyzes the condensation of (S)-aspartate-beta-semialdehyde [(S)-ASA] and pyruvate to 4-hydroxy-tetrahydrodipicolinate (HTPA). This is 4-hydroxy-tetrahydrodipicolinate synthase 1 from Halalkalibacterium halodurans (strain ATCC BAA-125 / DSM 18197 / FERM 7344 / JCM 9153 / C-125) (Bacillus halodurans).